We begin with the raw amino-acid sequence, 213 residues long: Small ribosomal subunit protein uS3 (213 aa).

The 69-residue stretch at 38 to 106 (IRKYVKEKIF…EFALEVSEIR (69 aa)) folds into the KH type-2 domain.

Belongs to the universal ribosomal protein uS3 family. As to quaternary structure, part of the 30S ribosomal subunit. Forms a tight complex with proteins S10 and S14.

Binds the lower part of the 30S subunit head. Binds mRNA in the 70S ribosome, positioning it for translation. The protein is Small ribosomal subunit protein uS3 of Maridesulfovibrio salexigens (strain ATCC 14822 / DSM 2638 / NCIMB 8403 / VKM B-1763) (Desulfovibrio salexigens).